We begin with the raw amino-acid sequence, 432 residues long: UDP-N-acetylmuramate--L-alanine ligase (432 aa).

108–114 (GAHGKTS) contributes to the ATP binding site.

It belongs to the MurCDEF family.

Its subcellular location is the cytoplasm. It carries out the reaction UDP-N-acetyl-alpha-D-muramate + L-alanine + ATP = UDP-N-acetyl-alpha-D-muramoyl-L-alanine + ADP + phosphate + H(+). It functions in the pathway cell wall biogenesis; peptidoglycan biosynthesis. Functionally, cell wall formation. This is UDP-N-acetylmuramate--L-alanine ligase from Bacillus velezensis (strain DSM 23117 / BGSC 10A6 / LMG 26770 / FZB42) (Bacillus amyloliquefaciens subsp. plantarum).